The sequence spans 159 residues: Ethylene-responsive transcription factor ERF069 (159 aa).

Disordered regions lie at residues 1–36 (MKRIVRISFTDMEATDSSSSEDESPPSSRRRGKKLV) and 128–159 (DAPTNFGRPDVDSAVVKKQDSDASGGASEEVV). Residues 74–134 (KFRGVRQRPW…IGPDAPTNFG (61 aa)) constitute a DNA-binding region (AP2/ERF). Over residues 136-148 (PDVDSAVVKKQDS) the composition is skewed to basic and acidic residues.

Belongs to the AP2/ERF transcription factor family. ERF subfamily.

Its subcellular location is the nucleus. In terms of biological role, probably acts as a transcriptional activator. Binds to the GCC-box pathogenesis-related promoter element. May be involved in the regulation of gene expression by stress factors and by components of stress signal transduction pathways. The protein is Ethylene-responsive transcription factor ERF069 (ERF069) of Arabidopsis thaliana (Mouse-ear cress).